The sequence spans 33 residues: Sucrose-6-phosphate hydrolase (33 aa).

Residue 15–18 (PLQE) participates in substrate binding. Residue Glu18 is part of the active site.

The protein belongs to the glycosyl hydrolase 32 family.

It carries out the reaction Hydrolysis of terminal non-reducing beta-D-fructofuranoside residues in beta-D-fructofuranosides.. It participates in glycan biosynthesis; sucrose metabolism. The chain is Sucrose-6-phosphate hydrolase from Fusobacterium mortiferum.